A 356-amino-acid chain; its full sequence is Alanine racemase, catabolic (356 aa).

Lysine 35 (proton acceptor; specific for D-alanine) is an active-site residue. The residue at position 35 (lysine 35) is an N6-(pyridoxal phosphate)lysine. Arginine 130 is a binding site for substrate. The Proton acceptor; specific for L-alanine role is filled by tyrosine 253. Methionine 301 provides a ligand contact to substrate.

It belongs to the alanine racemase family. It depends on pyridoxal 5'-phosphate as a cofactor.

It catalyses the reaction L-alanine = D-alanine. Its function is as follows. Isomerizes L-alanine to D-alanine which is then oxidized to pyruvate by DadA. In Escherichia coli O6:H1 (strain CFT073 / ATCC 700928 / UPEC), this protein is Alanine racemase, catabolic (dadX).